The chain runs to 455 residues: Nuclear distribution protein nudF (455 aa).

The LisH domain occupies 9-41 (QAEELHKSMIAYLVASDLPDTAAALRREVNLSE). Residues 61 to 88 (TSIARLQKKIMDLESRNATLQSELDNST) adopt a coiled-coil conformation. WD repeat units lie at residues 113-154 (SHRD…RTLK), 156-196 (HTRA…KNIR), 200-239 (GHDH…CVKT), 242-281 (GHTD…NIEH), 287-347 (GHEN…LMTL), 349-388 (GHDS…KCVK), 392-438 (AHES…IQMR), and 440-455 (VVAT…IFAG). The disordered stretch occupies residues 408–431 (KNVPGGDGAAEGEGNDKNGAGSEN).

It belongs to the WD repeat LIS1/nudF family. In terms of assembly, self-associates. Interacts with nudE and dynein.

It is found in the cytoplasm. Its subcellular location is the cytoskeleton. It localises to the spindle pole. Functionally, positively regulates the activity of the minus-end directed microtubule motor protein dynein. May enhance dynein-mediated microtubule sliding by targeting dynein to the microtubule plus end. Required for nuclear migration during vegetative growth as well as development. Required for retrograde early endosome (EE) transport from the hyphal tip. Required for localization of dynein to the mitotic spindle poles. Recruits additional proteins to the dynein complex at SPBs. This is Nuclear distribution protein nudF from Aspergillus flavus (strain ATCC 200026 / FGSC A1120 / IAM 13836 / NRRL 3357 / JCM 12722 / SRRC 167).